We begin with the raw amino-acid sequence, 225 residues long: Riboflavin kinase (225 aa).

A unknown region spans residues 1–89 (MPDIKYLKKL…SRIFSPDLDI (89 aa)). Positions 90 to 225 (LELEGKVLKG…LKKQGTENQK (136 aa)) are riboflavin kinase. Residue 99 to 104 (GLGEGQ) participates in CDP binding. Positions 128 and 130 each coordinate Mg(2+). FMN-binding residues include Thr-185 and Glu-193. 198–201 (IKLR) contacts CDP.

It belongs to the archaeal riboflavin kinase family. It depends on Mg(2+) as a cofactor.

The enzyme catalyses riboflavin + CTP = CDP + FMN + H(+). It functions in the pathway cofactor biosynthesis; FMN biosynthesis; FMN from riboflavin (CTP route): step 1/1. Catalyzes the CTP-dependent phosphorylation of riboflavin (vitamin B2) to form flavin mononucleotide (FMN). The sequence is that of Riboflavin kinase (ribK) from Methanosarcina barkeri (strain Fusaro / DSM 804).